A 448-amino-acid polypeptide reads, in one-letter code: Allantoinase (448 aa).

Zn(2+)-binding residues include His60, His62, Lys147, His183, His239, and Asp312. N6-carboxylysine is present on Lys147.

Belongs to the metallo-dependent hydrolases superfamily. Allantoinase family. Homotetramer. Requires Zn(2+) as cofactor. Post-translationally, carboxylation allows a single lysine to coordinate two zinc ions.

The enzyme catalyses (S)-allantoin + H2O = allantoate + H(+). It functions in the pathway nitrogen metabolism; (S)-allantoin degradation; allantoate from (S)-allantoin: step 1/1. Its function is as follows. Catalyzes the conversion of allantoin (5-ureidohydantoin) to allantoic acid by hydrolytic cleavage of the five-member hydantoin ring. The protein is Allantoinase of Deinococcus radiodurans (strain ATCC 13939 / DSM 20539 / JCM 16871 / CCUG 27074 / LMG 4051 / NBRC 15346 / NCIMB 9279 / VKM B-1422 / R1).